An 87-amino-acid polypeptide reads, in one-letter code: Small ribosomal subunit protein bS18B (87 aa).

Belongs to the bacterial ribosomal protein bS18 family. In terms of assembly, part of the 30S ribosomal subunit. Forms a tight heterodimer with protein bS6.

Binds as a heterodimer with protein bS6 to the central domain of the 16S rRNA, where it helps stabilize the platform of the 30S subunit. The chain is Small ribosomal subunit protein bS18B from Mycolicibacterium vanbaalenii (strain DSM 7251 / JCM 13017 / BCRC 16820 / KCTC 9966 / NRRL B-24157 / PYR-1) (Mycobacterium vanbaalenii).